A 75-amino-acid chain; its full sequence is UPF0352 protein YejL (75 aa).

Belongs to the UPF0352 family.

The polypeptide is UPF0352 protein YejL (Shigella dysenteriae serotype 1 (strain Sd197)).